The primary structure comprises 167 residues: Large ribosomal subunit protein uL10 (167 aa).

The protein belongs to the universal ribosomal protein uL10 family. Part of the ribosomal stalk of the 50S ribosomal subunit. The N-terminus interacts with L11 and the large rRNA to form the base of the stalk. The C-terminus forms an elongated spine to which L12 dimers bind in a sequential fashion forming a multimeric L10(L12)X complex.

In terms of biological role, forms part of the ribosomal stalk, playing a central role in the interaction of the ribosome with GTP-bound translation factors. In Erwinia tasmaniensis (strain DSM 17950 / CFBP 7177 / CIP 109463 / NCPPB 4357 / Et1/99), this protein is Large ribosomal subunit protein uL10.